A 375-amino-acid polypeptide reads, in one-letter code: 23S rRNA (uracil(747)-C(5))-methyltransferase RlmC (375 aa).

4 residues coordinate [4Fe-4S] cluster: Cys-3, Cys-11, Cys-14, and Cys-87. Residues Gln-212, Phe-241, Glu-262, and Asn-307 each coordinate S-adenosyl-L-methionine. Cys-334 (nucleophile) is an active-site residue.

Belongs to the class I-like SAM-binding methyltransferase superfamily. RNA M5U methyltransferase family. RlmC subfamily.

The catalysed reaction is uridine(747) in 23S rRNA + S-adenosyl-L-methionine = 5-methyluridine(747) in 23S rRNA + S-adenosyl-L-homocysteine + H(+). Functionally, catalyzes the formation of 5-methyl-uridine at position 747 (m5U747) in 23S rRNA. The chain is 23S rRNA (uracil(747)-C(5))-methyltransferase RlmC from Escherichia coli O6:H1 (strain CFT073 / ATCC 700928 / UPEC).